A 568-amino-acid polypeptide reads, in one-letter code: MKFSKMFIPTTKETPNDATLPSHQYLVRGGFIAQTGAGIYDFMPLGKIVLEKIRAIVKEEMDEAGANEVQFGFVTPLTLWQESGRATTMGAEMLRFKDRKNGEFVLSPTNEEAVVNMVKNRITSYKDLPLHLYQINTKFRDEARPRFGLMRGREFLMKDGYSFHSSEEDLVREFNLMETTYKKIYTKLGLDFRVVAADSGAIGGSGSKEFHVIADSGEDTLVVCDSCDYGANIEAAIRKPKTYSFERKSDSKKIHTPNTKTIEEVANFLNISKEQTIKAVIKKAIYEEKTQIVIFFVRGSDELEETKACNAVNALELIDASEDDIKEAGLVAGYCGLFNLPSNINFIIDLELKDEIGLACGANEEDYHLVNTDLSTLKDVKYYDLIAVQEGDICACCGGKLSYTKGIEAGHIFQLGTKYSSAMNANFLDENGKAKPFIMGCYGIGVSRLVAAVIEQNHDDKGCIWTKATAPFMVDIIVSNSKKEEEAKVGEELYSKLKQAGISTILDDRINARFGFKMSDFELLGFPYAVVIGKKLEDGLVEIVDRKTLEKIDVKVDEVISKILELVK.

Belongs to the class-II aminoacyl-tRNA synthetase family. ProS type 1 subfamily. As to quaternary structure, homodimer.

It is found in the cytoplasm. It catalyses the reaction tRNA(Pro) + L-proline + ATP = L-prolyl-tRNA(Pro) + AMP + diphosphate. Catalyzes the attachment of proline to tRNA(Pro) in a two-step reaction: proline is first activated by ATP to form Pro-AMP and then transferred to the acceptor end of tRNA(Pro). As ProRS can inadvertently accommodate and process non-cognate amino acids such as alanine and cysteine, to avoid such errors it has two additional distinct editing activities against alanine. One activity is designated as 'pretransfer' editing and involves the tRNA(Pro)-independent hydrolysis of activated Ala-AMP. The other activity is designated 'posttransfer' editing and involves deacylation of mischarged Ala-tRNA(Pro). The misacylated Cys-tRNA(Pro) is not edited by ProRS. This is Proline--tRNA ligase from Aliarcobacter butzleri (strain RM4018) (Arcobacter butzleri).